Consider the following 798-residue polypeptide: Suppressor of spindle checkpoint defect 1 (798 aa).

The stretch at Glu-339 to Glu-359 forms a coiled coil.

The protein belongs to the APC5 family. In terms of assembly, the APC/C complex is probably composed of at least 12 subunits: apc-2, apc-10, apc-11, cdc-26, emb-1, emb-27, emb-30, mat-1, mat-2, mat-3, such-1 and gfi-3. Expressed in head neurons, vulval precursor cells and in mature sperm stored in the spermatheca.

It participates in protein modification; protein ubiquitination. Its function is as follows. Probable component of the anaphase promoting complex/cyclosome (APC/C), a cell cycle-regulated E3 ubiquitin ligase that controls progression through mitosis and the G1 phase of the cell cycle. The APC/C complex acts by mediating ubiquitination and subsequent degradation of target proteins. Required for the metaphase to anaphase transition in meiosis. Plays a role in the segregation of DNA and centrioles during meiosis in male germ cells. The polypeptide is Suppressor of spindle checkpoint defect 1 (Caenorhabditis elegans).